We begin with the raw amino-acid sequence, 606 residues long: Pro-secreted protein ORF2 (606 aa).

The first 19 residues, M1–G19, serve as a signal peptide directing secretion. A disordered region spans residues T22–P54. The Nuclear localization signal signature appears at R28–R34. N255 carries an N-linked (GlcNAc...) asparagine; by host glycan. Residues I313 to Q339 form a particle formation region. Residue N510 is glycosylated (N-linked (GlcNAc...) asparagine; by host).

The protein belongs to the hepevirus capsid protein family. Homodimer. As to quaternary structure, self-assembles to form the capsid. The capsid is dominated by dimers that define the 30 morphological units. Interacts with phosphorylated protein ORF3. Post-translationally, N-glycosylated.

The protein resides in the secreted. The protein localises to the virion. Its subcellular location is the host cytoplasm. It localises to the host endoplasmic reticulum. It is found in the host Golgi apparatus. The protein resides in the host cell surface. The protein localises to the host nucleus. Plays a role in the inhibition of host antibody-mediated neutralization without blocking viral cell entry. In terms of biological role, forms an icosahedral capsid with a T=1 symmetry and a 34 nm diameter. The capsid is composed of 60 copies linked to each other. Binds to the 5' end of the genomic RNA to mediate genome encapsidation. This chain is Pro-secreted protein ORF2, found in Gallus gallus (Chicken).